Consider the following 311-residue polypeptide: Cytosolic Fe-S cluster assembly factor Nubp1 homolog (311 aa).

Residues cysteine 9, cysteine 23, cysteine 26, and cysteine 32 each coordinate [4Fe-4S] cluster. 63-70 lines the ATP pocket; the sequence is GKGGVGKS. Positions 240 and 243 each coordinate [4Fe-4S] cluster.

The protein belongs to the Mrp/NBP35 ATP-binding proteins family. NUBP1/NBP35 subfamily. In terms of assembly, heterotetramer of 2 Nubp1 and 2 Nubp2 chains. [4Fe-4S] cluster is required as a cofactor.

It localises to the cytoplasm. Its function is as follows. Component of the cytosolic iron-sulfur (Fe/S) protein assembly (CIA) machinery. Required for maturation of extramitochondrial Fe-S proteins. The Nubp1-Nubp2 heterotetramer forms a Fe-S scaffold complex, mediating the de novo assembly of an Fe-S cluster and its transfer to target apoproteins. In Drosophila pseudoobscura pseudoobscura (Fruit fly), this protein is Cytosolic Fe-S cluster assembly factor Nubp1 homolog.